A 377-amino-acid polypeptide reads, in one-letter code: Cytochrome c peroxidase, mitochondrial (377 aa).

Residues 1 to 17 (MSFRAPNLIRSAAGRRA) constitute a mitochondrion transit peptide. His-138 functions as the Proton acceptor in the catalytic mechanism. His-261 contributes to the heme b binding site. Trp-277 (tryptophan radical intermediate) is an active-site residue.

The protein belongs to the peroxidase family. Cytochrome c peroxidase subfamily. As to quaternary structure, forms a one-to-one complex with cytochrome c. Requires heme b as cofactor.

The protein resides in the mitochondrion matrix. Its subcellular location is the mitochondrion intermembrane space. The enzyme catalyses 2 Fe(II)-[cytochrome c] + H2O2 + 2 H(+) = 2 Fe(III)-[cytochrome c] + 2 H2O. Functionally, destroys radicals which are normally produced within the cells and which are toxic to biological systems. The polypeptide is Cytochrome c peroxidase, mitochondrial (CCP1) (Cryptococcus neoformans var. neoformans serotype D (strain JEC21 / ATCC MYA-565) (Filobasidiella neoformans)).